The chain runs to 125 residues: Small ribosomal subunit protein mS41 (125 aa).

Residues 1-23 (MLFRRLFSSSVIVQAASKTSLRK) constitute a mitochondrion transit peptide.

It belongs to the mitochondrion-specific ribosomal protein mS41 family.

The protein resides in the mitochondrion. Functionally, involved in telomere length regulation. This is Small ribosomal subunit protein mS41 (FYV4) from Kluyveromyces lactis (strain ATCC 8585 / CBS 2359 / DSM 70799 / NBRC 1267 / NRRL Y-1140 / WM37) (Yeast).